Here is a 100-residue protein sequence, read N- to C-terminus: Large ribosomal subunit protein eL21 (100 aa).

This sequence belongs to the eukaryotic ribosomal protein eL21 family.

The polypeptide is Large ribosomal subunit protein eL21 (Pyrobaculum aerophilum (strain ATCC 51768 / DSM 7523 / JCM 9630 / CIP 104966 / NBRC 100827 / IM2)).